The primary structure comprises 78 residues: UPF0335 protein RPR_04100 (78 aa).

This sequence belongs to the UPF0335 family.

The sequence is that of UPF0335 protein RPR_04100 from Rickettsia peacockii (strain Rustic).